The chain runs to 73 residues: UPF0154 protein LJ_1506 (73 aa).

A helical transmembrane segment spans residues 3-23 (LGLAIFLIIIALLIGLVGGFY).

The protein belongs to the UPF0154 family.

The protein resides in the cell membrane. The protein is UPF0154 protein LJ_1506 of Lactobacillus johnsonii (strain CNCM I-12250 / La1 / NCC 533).